Consider the following 121-residue polypeptide: Ribosome-binding factor A (121 aa).

This sequence belongs to the RbfA family. In terms of assembly, monomer. Binds 30S ribosomal subunits, but not 50S ribosomal subunits or 70S ribosomes.

It localises to the cytoplasm. One of several proteins that assist in the late maturation steps of the functional core of the 30S ribosomal subunit. Associates with free 30S ribosomal subunits (but not with 30S subunits that are part of 70S ribosomes or polysomes). Required for efficient processing of 16S rRNA. May interact with the 5'-terminal helix region of 16S rRNA. The polypeptide is Ribosome-binding factor A (Clostridium acetobutylicum (strain ATCC 824 / DSM 792 / JCM 1419 / IAM 19013 / LMG 5710 / NBRC 13948 / NRRL B-527 / VKM B-1787 / 2291 / W)).